Here is a 79-residue protein sequence, read N- to C-terminus: Delta-hormotoxin-Cpt1a (79 aa).

The N-terminal stretch at M1–S20 is a signal peptide. Positions R21–A31 are excised as a propeptide. 3 disulfide bridges follow: C36-C75, C38-C66, and C56-C76.

The protein belongs to the sea anemone sodium channel inhibitory toxin family.

It localises to the secreted. Its subcellular location is the nematocyst. Its function is as follows. In neuromuscular preparation of crustaceans, the toxin increased neurotransmitter release, causing repetitive firing of the axons. May affect sodium channels (Nav). The sequence is that of Delta-hormotoxin-Cpt1a from Calliactis parasitica (Sea anemone).